A 209-amino-acid chain; its full sequence is Urease accessory protein UreG (209 aa).

Residue 16–23 coordinates GTP; the sequence is GPVGSGKT.

Belongs to the SIMIBI class G3E GTPase family. UreG subfamily. As to quaternary structure, homodimer. UreD, UreF and UreG form a complex that acts as a GTP-hydrolysis-dependent molecular chaperone, activating the urease apoprotein by helping to assemble the nickel containing metallocenter of UreC. The UreE protein probably delivers the nickel.

The protein resides in the cytoplasm. Its function is as follows. Facilitates the functional incorporation of the urease nickel metallocenter. This process requires GTP hydrolysis, probably effectuated by UreG. The protein is Urease accessory protein UreG of Blochmanniella floridana.